The sequence spans 29 residues: Dermaseptin-S5 (29 aa).

Belongs to the frog skin active peptide (FSAP) family. Dermaseptin subfamily. Expressed by the skin glands.

The protein localises to the secreted. Its function is as follows. Potent antimicrobial peptide with activity against bacteria and protozoa. Also has activity against fungi. Probably acts by disturbing membrane functions with its amphipathic structure. This is Dermaseptin-S5 from Phyllomedusa sauvagei (Sauvage's leaf frog).